Reading from the N-terminus, the 344-residue chain is 2-aminoethylphosphonate--pyruvate transaminase (344 aa).

Lysine 194 is subject to N6-(pyridoxal phosphate)lysine.

The protein belongs to the class-V pyridoxal-phosphate-dependent aminotransferase family. PhnW subfamily. Homodimer. Pyridoxal 5'-phosphate serves as cofactor.

The catalysed reaction is (2-aminoethyl)phosphonate + pyruvate = phosphonoacetaldehyde + L-alanine. Involved in phosphonate degradation. In Bacillus cereus, this protein is 2-aminoethylphosphonate--pyruvate transaminase.